A 404-amino-acid polypeptide reads, in one-letter code: Na(+)/H(+) antiporter NhaA 2 (404 aa).

The next 11 membrane-spanning stretches (helical) occupy residues 24 to 44, 67 to 87, 103 to 123, 132 to 152, 161 to 181, 184 to 204, 216 to 236, 266 to 286, 303 to 323, 339 to 359, and 372 to 392; these read GIIL…SFSG, VLHW…GMEI, ILPI…YALF, GWGI…SLVA, VFLT…IAIF, SQIS…LILA, IILG…ATIA, TPWS…GIII, IIFG…FILI, LYGA…VSSL, and MCIM…FKFI.

The protein belongs to the NhaA Na(+)/H(+) (TC 2.A.33) antiporter family.

It is found in the cell membrane. It carries out the reaction Na(+)(in) + 2 H(+)(out) = Na(+)(out) + 2 H(+)(in). Its function is as follows. Na(+)/H(+) antiporter that extrudes sodium in exchange for external protons. This is Na(+)/H(+) antiporter NhaA 2 from Clostridium beijerinckii (strain ATCC 51743 / NCIMB 8052) (Clostridium acetobutylicum).